We begin with the raw amino-acid sequence, 164 residues long: Lectin (164 aa).

Positions 1–15 are cleaved as a signal peptide; sequence TVATILTILASTCMA. The Bulb-type lectin domain maps to 16–125; the sequence is RNVLVNNEGL…DIWSTGTYRK (110 aa). Cys-44 and Cys-68 are disulfide-bonded.

In terms of assembly, homotetramer. In terms of processing, not glycosylated.

Its function is as follows. Mannose-specific lectin. Induces a Th1-type immune response in vitro. Causes a 4-fold increase in the proliferation of murine thymocytes and a significant increase in the production of nitric oxide at 24 hours in a macrophage cell line. Stimulates the production of the pro-inflammatory cytokines TNF and IL12 by rat peritoneal macrophages in a dose-dependent manner and of the cytokines IFNG and IL2 in murine thymocytes. Has hemagglutination activity towards rabbit erythrocytes. The polypeptide is Lectin (Allium cepa (Onion)).